The following is a 242-amino-acid chain: tRNA (guanine-N(1)-)-methyltransferase (242 aa).

S-adenosyl-L-methionine-binding positions include G113 and 133–138; that span reads IGDYVL.

This sequence belongs to the RNA methyltransferase TrmD family. As to quaternary structure, homodimer.

The protein localises to the cytoplasm. The enzyme catalyses guanosine(37) in tRNA + S-adenosyl-L-methionine = N(1)-methylguanosine(37) in tRNA + S-adenosyl-L-homocysteine + H(+). Functionally, specifically methylates guanosine-37 in various tRNAs. This chain is tRNA (guanine-N(1)-)-methyltransferase, found in Shewanella sediminis (strain HAW-EB3).